We begin with the raw amino-acid sequence, 274 residues long: Cytochrome b-c1 complex subunit Rieske, mitochondrial (274 aa).

Over Ser-79–Ser-103 the chain is Mitochondrial matrix. The helical transmembrane segment at Arg-104–Met-140 threads the bilayer. The Mitochondrial intermembrane segment spans residues Ser-141–Gly-274. One can recognise a Rieske domain in the interval Glu-187–Ile-272. Residues Cys-217, His-219, Cys-236, His-239, and Ser-241 each contribute to the [2Fe-2S] cluster site. A disulfide bond links Cys-222 and Cys-238.

It belongs to the Rieske iron-sulfur protein family. In terms of assembly, component of the ubiquinol-cytochrome c oxidoreductase (cytochrome b-c1 complex, complex III, CIII), a multisubunit enzyme composed of 11 subunits. The complex is composed of 3 respiratory subunits cytochrome b, cytochrome c1 and Rieske protein UQCRFS1, 2 core protein subunits UQCRC1/QCR1 and UQCRC2/QCR2, and 6 low-molecular weight protein subunits UQCRH/QCR6, UQCRB/QCR7, UQCRQ/QCR8, UQCR10/QCR9, UQCR11/QCR10 and subunit 9, the cleavage product of Rieske protein UQCRFS1. The complex exists as an obligatory dimer and forms supercomplexes (SCs) in the inner mitochondrial membrane with NADH-ubiquinone oxidoreductase (complex I, CI) and cytochrome c oxidase (complex IV, CIV), resulting in different assemblies (supercomplex SCI(1)III(2)IV(1) and megacomplex MCI(2)III(2)IV(2)). Incorporation of the Rieske protein UQCRFS1 is the penultimate step in complex III assembly. Interacts with TTC19, which is involved in the clearance of UQCRFS1 fragments. As to quaternary structure, component of the ubiquinol-cytochrome c oxidoreductase (cytochrome b-c1 complex, complex III, CIII). Subunit 9 corresponds to the mitochondrial targeting sequence (MTS) of Rieske protein UQCRFS1. It is retained after processing and incorporated inside complex III, where it remains bound to the complex and localizes between the 2 core subunits UQCRC1/QCR1 and UQCRC2/QCR2. [2Fe-2S] cluster serves as cofactor. Post-translationally, proteolytic processing is necessary for the correct insertion of UQCRFS1 in the complex III dimer. Several fragments are generated during UQCRFS1 insertion, most probably due to the endogenous matrix-processing peptidase (MPP) activity of the 2 core protein subunits UQCRC1/QCR1 and UQCRC2/QCR2, which are homologous to the 2 mitochondrial-processing peptidase (MPP) subunits beta-MPP and alpha-MPP respectively. The action of the protease is also necessary for the clearance of the UQCRFS1 fragments.

It is found in the mitochondrion inner membrane. It carries out the reaction a quinol + 2 Fe(III)-[cytochrome c](out) = a quinone + 2 Fe(II)-[cytochrome c](out) + 2 H(+)(out). In terms of biological role, component of the ubiquinol-cytochrome c oxidoreductase, a multisubunit transmembrane complex that is part of the mitochondrial electron transport chain which drives oxidative phosphorylation. The respiratory chain contains 3 multisubunit complexes succinate dehydrogenase (complex II, CII), ubiquinol-cytochrome c oxidoreductase (cytochrome b-c1 complex, complex III, CIII) and cytochrome c oxidase (complex IV, CIV), that cooperate to transfer electrons derived from NADH and succinate to molecular oxygen, creating an electrochemical gradient over the inner membrane that drives transmembrane transport and the ATP synthase. The cytochrome b-c1 complex catalyzes electron transfer from ubiquinol to cytochrome c, linking this redox reaction to translocation of protons across the mitochondrial inner membrane, with protons being carried across the membrane as hydrogens on the quinol. In the process called Q cycle, 2 protons are consumed from the matrix, 4 protons are released into the intermembrane space and 2 electrons are passed to cytochrome c. The Rieske protein is a catalytic core subunit containing a [2Fe-2S] iron-sulfur cluster. It cycles between 2 conformational states during catalysis to transfer electrons from the quinol bound in the Q(0) site in cytochrome b to cytochrome c1. Incorporation of UQCRFS1 is the penultimate step in complex III assembly. Component of the ubiquinol-cytochrome c oxidoreductase (cytochrome b-c1 complex, complex III, CIII). UQCRFS1 undergoes proteolytic processing once it is incorporated in the complex III dimer. One of the fragments, called subunit 9, corresponds to its mitochondrial targeting sequence (MTS). The proteolytic processing is necessary for the correct insertion of UQCRFS1 in the complex III dimer, but the persistence of UQCRFS1-derived fragments may prevent newly imported UQCRFS1 to be processed and assembled into complex III and is detrimental for the complex III structure and function. The sequence is that of Cytochrome b-c1 complex subunit Rieske, mitochondrial (UQCRFS1) from Lagothrix lagotricha (Brown woolly monkey).